We begin with the raw amino-acid sequence, 479 residues long: MKGGTMVENAQYLDASASAPGSTTPLETAWIRVREKLKSEVGEVEYRTWLRQIVLGPLEEDELTLYLPTRFLRDWVRSQYEERLQTLWRTEREDIKGVELQVKRGLPEVSMGDAEDGEDGSGEGHELATQAAAPESRSDLAVPLDPRFTFDTFIVGKPNEFAYACARRVAEKPSSPGFNPLFLYGGVGLGKTHLMHAIGTELTRTGKVSVAYMSAEKFMYRFIAAIRSQSTMEFKEQLRSVDVLMIDDLQFLIGKDNTQEEFFHTFNALVDAGRQIIVSADKSPSDLSGLEDRLRTRLGCGMVADIHATTFELRISILEAKAKASGTHVPSKVLEYLAHKITTNVRELEGALNRLIAHADLVGRPVTLDTTQDVLKDMLKAHDRRVTIEEIQRKVSEHWNIRLTDMSSARRARAVARPRQVAMYLAKQLTSRSLPEIGRKFGNRDHTTVMHAVNRVTELMDQDTSFAEDVELLRRMLEG.

Positions 1–94 are domain I, interacts with DnaA modulators; it reads MKGGTMVENA…QTLWRTERED (94 aa). Residues 94-142 form a domain II region; the sequence is DIKGVELQVKRGLPEVSMGDAEDGEDGSGEGHELATQAAAPESRSDLAV. The disordered stretch occupies residues 106–137; that stretch reads LPEVSMGDAEDGEDGSGEGHELATQAAAPESR. Residues 143–359 form a domain III, AAA+ region region; the sequence is PLDPRFTFDT…GALNRLIAHA (217 aa). Residues G188, G190, K191, and T192 each coordinate ATP. The domain IV, binds dsDNA stretch occupies residues 360 to 479; the sequence is DLVGRPVTLD…VELLRRMLEG (120 aa).

Belongs to the DnaA family. Oligomerizes as a right-handed, spiral filament on DNA at oriC.

It is found in the cytoplasm. Plays an essential role in the initiation and regulation of chromosomal replication. ATP-DnaA binds to the origin of replication (oriC) to initiate formation of the DNA replication initiation complex once per cell cycle. Binds the DnaA box (a 9 base pair repeat at the origin) and separates the double-stranded (ds)DNA. Forms a right-handed helical filament on oriC DNA; dsDNA binds to the exterior of the filament while single-stranded (ss)DNA is stabiized in the filament's interior. The ATP-DnaA-oriC complex binds and stabilizes one strand of the AT-rich DNA unwinding element (DUE), permitting loading of DNA polymerase. After initiation quickly degrades to an ADP-DnaA complex that is not apt for DNA replication. Binds acidic phospholipids. The sequence is that of Chromosomal replication initiator protein DnaA from Gluconobacter oxydans (strain 621H) (Gluconobacter suboxydans).